A 580-amino-acid polypeptide reads, in one-letter code: Formate--tetrahydrofolate ligase (580 aa).

65 to 72 is a binding site for ATP; that stretch reads TPHGEGKT.

This sequence belongs to the formate--tetrahydrofolate ligase family.

The enzyme catalyses (6S)-5,6,7,8-tetrahydrofolate + formate + ATP = (6R)-10-formyltetrahydrofolate + ADP + phosphate. The protein operates within one-carbon metabolism; tetrahydrofolate interconversion. In Shewanella baltica (strain OS223), this protein is Formate--tetrahydrofolate ligase.